The primary structure comprises 757 residues: Kin of IRRE-like protein 1 (757 aa).

The N-terminal stretch at 1–16 is a signal peptide; the sequence is MLSLLVWILTLSDTFS. Residues 17–499 lie on the Extracellular side of the membrane; the sequence is QGTQTRFSQE…REVLPVGIIA (483 aa). 5 consecutive Ig-like C2-type domains span residues 21 to 115, 120 to 216, 223 to 299, 308 to 387, and 392 to 488; these read TRFS…AKLT, PEDT…TSIE, PTVT…TNVS, PRIV…EVPL, and PPII…IQLE. Residues Cys42 and Cys100 are joined by a disulfide bond. 2 N-linked (GlcNAc...) asparagine glycosylation sites follow: Asn46 and Asn140. Intrachain disulfides connect Cys143–Cys200 and Cys244–Cys287. Asn297 carries an N-linked (GlcNAc...) asparagine glycan. Cys329 and Cys371 are oxidised to a cystine. A Cell attachment site motif is present at residues 405–407; that stretch reads RGD. A disulfide bridge connects residues Cys413 and Cys472. Residue Asn471 is glycosylated (N-linked (GlcNAc...) asparagine). The chain crosses the membrane as a helical span at residues 500 to 520; sequence GATIGASILLIFFFIALVFFL. Residues 521 to 757 are Cytoplasmic-facing; the sequence is YRRRKGSRKD…RFQQRMQTHV (237 aa). At Ser574 the chain carries Phosphoserine. Phosphotyrosine; by FYN occurs at positions 605 and 606. A phosphotyrosine mark is found at Tyr622 and Tyr625. The segment at 649-679 is disordered; the sequence is QLNTYSRGPASDYGPEPTPPGPAAPAGTDTT. At Tyr724 the chain carries Phosphotyrosine.

This sequence belongs to the immunoglobulin superfamily. Interacts with TJP1/ZO-1 and with NPHS2/podocin (via the C-terminus). Interacts with NPHS1/nephrin (via the Ig-like domains); this interaction is dependent on KIRREL1 glycosylation. Homodimer (via the Ig-like domains). Interacts when tyrosine-phosphorylated with GRB2. In terms of processing, phosphorylation probably regulates the interaction with NSH2. Phosphorylated at Tyr-605 and Tyr-606 by FYN, leading to GRB2 binding. Post-translationally, N-glycosylated. As to expression, abundantly expressed in kidney. Specifically expressed in podocytes of kidney glomeruli.

The protein localises to the cell membrane. In terms of biological role, required for proper function of the glomerular filtration barrier. It is involved in the maintenance of a stable podocyte architecture with interdigitating foot processes connected by specialized cell-cell junctions, known as the slit diaphragm. It is a signaling protein that needs the presence of TEC kinases to fully trans-activate the transcription factor AP-1. This is Kin of IRRE-like protein 1 from Homo sapiens (Human).